A 484-amino-acid polypeptide reads, in one-letter code: Aldehyde dehydrogenase family 3 member A2 (484 aa).

Residues 1-463 (MERQVLRLRQ…FLLKQFNKGR (463 aa)) are Cytoplasmic-facing. NAD(+) is bound at residue 185-190 (GNTAVG). Residues Glu-207 and Cys-241 contribute to the active site. A Phosphoserine modification is found at Ser-293. The helical transmembrane segment at 464–484 (LGMLLFVCLVAVAAVIVKDQL) threads the bilayer. The short motif at 481 to 484 (KDQL) is the Prevents secretion from ER element.

This sequence belongs to the aldehyde dehydrogenase family. As to quaternary structure, homodimer.

It is found in the membrane. It localises to the microsome membrane. Its subcellular location is the endoplasmic reticulum membrane. The catalysed reaction is an aldehyde + NAD(+) + H2O = a carboxylate + NADH + 2 H(+). It catalyses the reaction a fatty aldehyde + NAD(+) + H2O = a fatty acid + NADH + 2 H(+). The enzyme catalyses hexadecanoate + NADH + 2 H(+) = hexadecanal + NAD(+) + H2O. It carries out the reaction octanal + NAD(+) + H2O = octanoate + NADH + 2 H(+). The catalysed reaction is (2E)-hexadecenal + NAD(+) + H2O = (E)-hexadec-2-enoate + NADH + 2 H(+). It catalyses the reaction 22-oxodocosanoate + NAD(+) + H2O = docosanedioate + NADH + 2 H(+). The enzyme catalyses 2,6,10,14-tetramethylpentadecanal + NAD(+) + H2O = 2,6,10,14-tetramethylpentadecanoate + NADH + 2 H(+). It carries out the reaction octadecanal + NAD(+) + H2O = octadecanoate + NADH + 2 H(+). The catalysed reaction is dodecanoate + NADH + 2 H(+) = dodecanal + NAD(+) + H2O. It catalyses the reaction decanal + NAD(+) + H2O = decanoate + NADH + 2 H(+). The enzyme catalyses tetradecanal + NAD(+) + H2O = tetradecanoate + NADH + 2 H(+). It carries out the reaction heptanal + NAD(+) + H2O = heptanoate + NADH + 2 H(+). The catalysed reaction is (2E,6E)-farnesal + NAD(+) + H2O = (2E,6E)-farnesoate + NADH + 2 H(+). Catalyzes the oxidation of medium and long-chain aliphatic aldehydes to fatty acids. Active on a variety of saturated and unsaturated aliphatic aldehydes between 6 and 24 carbons in length. Responsible for conversion of the sphingosine 1-phosphate (S1P) degradation product hexadecenal to hexadecenoic acid. The chain is Aldehyde dehydrogenase family 3 member A2 (Aldh3a2) from Mus musculus (Mouse).